Reading from the N-terminus, the 236-residue chain is Lipoprotein NlpE (236 aa).

A signal peptide spans 1–20; it reads MVKKAIVTAMAVISLFTLMG. Cys21 is lipidated: N-palmitoyl cysteine. A lipid anchor (S-diacylglycerol cysteine) is attached at Cys21. Positions 21-100 are N-terminal domain; the sequence is CNNRAEVDTL…WARTADKLVL (80 aa). The Periplasmic portion of the chain corresponds to 21–236; the sequence is CNNRAEVDTL…PNQDCSSLGQ (216 aa). Residues 51–54 carry the CXXC motif; it reads CADC. Residues 126–236 are C-terminal domain; the sequence is PIESQFNYTL…PNQDCSSLGQ (111 aa). The interval 144–156 is could contain a copper-binding motif; the sequence is MTPMTLRGMYFYM. Cys165 and Cys231 are oxidised to a cystine.

Probably exists as a monomer in vivo, can however form homodimers which swap domains. Post-translationally, palmitoylated. Seems to only form a disulfide bond between Cys-165 and Cys-231. The 2 other cysteine residues may however be chemically active.

It localises to the cell outer membrane. Involved in copper homeostasis, could be involved in both copper efflux and the delivery of copper to copper-dependent enzymes. Required for efficient binding of stationary phase cells to hydrophobic surfaces, part of the process of biofilm formation. Functions during envelope stress responses; when overproduced induces degP through the activation of the two-component envelope stress response system CpxA/CpxR. DegP induction seems to require membrane anchoring of this protein. Structural changes and/or interaction of the CXXC motif with its environment may lead to activation of the Cpx stress response. The chain is Lipoprotein NlpE from Escherichia coli (strain K12).